A 363-amino-acid chain; its full sequence is Peptide chain release factor 1 (363 aa).

Gln237 is subject to N5-methylglutamine. Basic and acidic residues predominate over residues 284–297 (ERAKQQSERSEQRR). The tract at residues 284–306 (ERAKQQSERSEQRRLAVGSGDRS) is disordered.

Belongs to the prokaryotic/mitochondrial release factor family. In terms of processing, methylated by PrmC. Methylation increases the termination efficiency of RF1.

Its subcellular location is the cytoplasm. Functionally, peptide chain release factor 1 directs the termination of translation in response to the peptide chain termination codons UAG and UAA. This chain is Peptide chain release factor 1, found in Halorhodospira halophila (strain DSM 244 / SL1) (Ectothiorhodospira halophila (strain DSM 244 / SL1)).